A 496-amino-acid polypeptide reads, in one-letter code: Lysine--tRNA ligase (496 aa).

Residues Glu405 and Glu412 each coordinate Mg(2+).

This sequence belongs to the class-II aminoacyl-tRNA synthetase family. Homodimer. Mg(2+) serves as cofactor.

Its subcellular location is the cytoplasm. The catalysed reaction is tRNA(Lys) + L-lysine + ATP = L-lysyl-tRNA(Lys) + AMP + diphosphate. The polypeptide is Lysine--tRNA ligase (Vesicomyosocius okutanii subsp. Calyptogena okutanii (strain HA)).